The sequence spans 521 residues: Protein YjiT (521 aa).

This Escherichia coli (strain K12) protein is Protein YjiT (yjiT).